Reading from the N-terminus, the 256-residue chain is tRNA pseudouridine synthase A (256 aa).

Aspartate 52 acts as the Nucleophile in catalysis. Substrate is bound at residue tyrosine 110.

This sequence belongs to the tRNA pseudouridine synthase TruA family. As to quaternary structure, homodimer.

The catalysed reaction is uridine(38/39/40) in tRNA = pseudouridine(38/39/40) in tRNA. Functionally, formation of pseudouridine at positions 38, 39 and 40 in the anticodon stem and loop of transfer RNAs. The sequence is that of tRNA pseudouridine synthase A from Stenotrophomonas maltophilia (strain R551-3).